The following is a 144-amino-acid chain: Large ribosomal subunit protein uL16 (144 aa).

Positions 1–19 (MLLPKRVKYRRQHRPKTTG) are enriched in basic residues. The interval 1-26 (MLLPKRVKYRRQHRPKTTGRSKGGNE) is disordered.

This sequence belongs to the universal ribosomal protein uL16 family. Part of the 50S ribosomal subunit.

Functionally, binds 23S rRNA and is also seen to make contacts with the A and possibly P site tRNAs. This is Large ribosomal subunit protein uL16 from Macrococcus caseolyticus (strain JCSC5402) (Macrococcoides caseolyticum).